Consider the following 103-residue polypeptide: Small ribosomal subunit protein uS14c (103 aa).

Belongs to the universal ribosomal protein uS14 family. As to quaternary structure, part of the 30S ribosomal subunit.

The protein resides in the plastid. The protein localises to the chloroplast. In terms of biological role, binds 16S rRNA, required for the assembly of 30S particles. In Lolium perenne (Perennial ryegrass), this protein is Small ribosomal subunit protein uS14c.